A 198-amino-acid chain; its full sequence is Small ribosomal subunit protein eS1 (198 aa).

It belongs to the eukaryotic ribosomal protein eS1 family.

The polypeptide is Small ribosomal subunit protein eS1 (Methanospirillum hungatei JF-1 (strain ATCC 27890 / DSM 864 / NBRC 100397 / JF-1)).